The primary structure comprises 248 residues: Ubiquinone/menaquinone biosynthesis C-methyltransferase UbiE (248 aa).

Residues Ser68 and Asp92 each coordinate S-adenosyl-L-methionine.

It belongs to the class I-like SAM-binding methyltransferase superfamily. MenG/UbiE family.

It catalyses the reaction a 2-demethylmenaquinol + S-adenosyl-L-methionine = a menaquinol + S-adenosyl-L-homocysteine + H(+). The catalysed reaction is a 2-methoxy-6-(all-trans-polyprenyl)benzene-1,4-diol + S-adenosyl-L-methionine = a 5-methoxy-2-methyl-3-(all-trans-polyprenyl)benzene-1,4-diol + S-adenosyl-L-homocysteine + H(+). Its pathway is quinol/quinone metabolism; menaquinone biosynthesis; menaquinol from 1,4-dihydroxy-2-naphthoate: step 2/2. It participates in cofactor biosynthesis; ubiquinone biosynthesis. Methyltransferase required for the conversion of demethylmenaquinol (DMKH2) to menaquinol (MKH2) and the conversion of 2-polyprenyl-6-methoxy-1,4-benzoquinol (DDMQH2) to 2-polyprenyl-3-methyl-6-methoxy-1,4-benzoquinol (DMQH2). The protein is Ubiquinone/menaquinone biosynthesis C-methyltransferase UbiE of Rickettsia africae (strain ESF-5).